The following is a 119-amino-acid chain: Hemerythrin subunit B (119 aa).

Fe cation contacts are provided by H26, H55, E59, H74, H78, H107, and D112.

This sequence belongs to the hemerythrin family.

Its function is as follows. Hemerythrin is a respiratory protein in blood cells of certain marine worms. The oxygen-binding site in each chain contains two iron atoms. This is Hemerythrin subunit B from Sipunculus nudus (Sipunculan worm).